The sequence spans 1770 residues: Serine/threonine-protein kinase RIM15 (1770 aa).

The tract at residues 334 to 358 is disordered; sequence HSLSTFPQDNGNNNNNNNNNNNNNN. Residues 343–358 show a composition bias toward low complexity; sequence NGNNNNNNNNNNNNNN. Residues Ser-380 and Ser-476 each carry the phosphoserine modification. Disordered regions lie at residues 530 to 563 and 583 to 694; these read TPTANDIRHPSPLPRSCSNTVMKLPTPRRKLDSN and STIS…NSVL. Over residues 583–601 the composition is skewed to polar residues; sequence STISIDRDNNTNSRGSSMK. Low complexity predominate over residues 611–632; it reads SRTSNSERPSSSSSRLGIRSRS. Residues 637 to 660 are compositionally biased toward basic and acidic residues; sequence QKIEYSHVDNDDRTNEMLSRDKDS. Low complexity predominate over residues 669–692; sequence TTITSSTQATTTGTKTNSNNSTNS. Thr-704 carries the phosphothreonine modification. Phosphoserine occurs at positions 709, 733, 736, and 737. Phosphothreonine is present on Thr-747. Positions 794–1254 constitute a Protein kinase domain; it reads YDILKPISKG…IQEIKDHPYF (461 aa). Residues 800 to 808 and Lys-823 each bind ATP; that span reads ISKGAYGSV. The active-site Proton acceptor is Asp-918. Positions 970-980 are enriched in low complexity; sequence NNFTMNNNNSN. Residues 970-1032 form a disordered region; sequence NNFTMNNNNS…MTPTPSTNTV (63 aa). The segment covering 981–990 has biased composition (polar residues); the sequence is HSQLSTPDSF. The span at 1014 to 1031 shows a compositional bias: low complexity; it reads YSSTSNSHSMTPTPSTNT. 3 positions are modified to phosphoserine: Ser-1044, Ser-1048, and Ser-1064. Thr-1075 carries the phosphothreonine; by PHO85 modification. An AGC-kinase C-terminal domain is found at 1255–1320; the sequence is KNVDWDHVYD…NTDVSELSAA (66 aa). A compositionally biased stretch (low complexity) spans 1378 to 1391; that stretch reads TGYITPNGTGTTTT. The interval 1378 to 1403 is disordered; that stretch reads TGYITPNGTGTTTTSAKNSPNLKNLS. The span at 1392-1401 shows a compositional bias: polar residues; sequence SAKNSPNLKN. The residue at position 1421 (Ser-1421) is a Phosphoserine. Disordered stretches follow at residues 1448–1507 and 1519–1572; these read KSEH…STFG and FSTR…PANT. Over residues 1463–1481 the composition is skewed to low complexity; that stretch reads SSASLMGSSSDGSVSTPGS. Residues Ser-1531, Ser-1538, Ser-1542, and Ser-1565 each carry the phosphoserine modification. The 115-residue stretch at 1636-1750 folds into the Response regulatory domain; that stretch reads DVLVCEPIPI…ELKKLVAKYA (115 aa). Ser-1764 is modified (phosphoserine).

This sequence belongs to the protein kinase superfamily. Ser/Thr protein kinase family. Interacts with the cyclin-dependent kinase (CDK) PHO85 and IGO1. Autophosphorylated. Phosphorylation by PKA strongly inhibits kinase activity. Phosphorylation by cyclin-CDK PHO80-PHO85 under favorable growth condition causes inactivation of RIM15 by promoting its export to the cytoplasm.

The protein localises to the cytoplasm. It localises to the nucleus. The enzyme catalyses L-seryl-[protein] + ATP = O-phospho-L-seryl-[protein] + ADP + H(+). It catalyses the reaction L-threonyl-[protein] + ATP = O-phospho-L-threonyl-[protein] + ADP + H(+). Its activity is regulated as follows. Kinase activity is inhibited by phosphorylation by cAMP-dependent protein kinase (PKA). Functionally, protein kinase that positively regulates proper entry into stationary phase of cells under nutrient starvation conditions. Involved in glycogen and trehalose accumulation, derepression of stress-induced genes, induction of thermotolerance and starvation resistance, and proper G1 cell cycle arrest. Also involved in the activation of a meiotic genes activation pathway. Phosphorylates IGO1 and IGO2, both involved in the TORC1 control of gene expression and chronological life span. This Saccharomyces cerevisiae (strain ATCC 204508 / S288c) (Baker's yeast) protein is Serine/threonine-protein kinase RIM15 (RIM15).